Consider the following 232-residue polypeptide: Sugar fermentation stimulation protein homolog (232 aa).

The protein belongs to the SfsA family.

The protein is Sugar fermentation stimulation protein homolog of Ruegeria sp. (strain TM1040) (Silicibacter sp.).